We begin with the raw amino-acid sequence, 426 residues long: MHDIEHIRKNPKGFEKAIKSRGVKEFTAKEILEIDHKKRSLTTKLQALNKQRNEVTEEIKRLKMNKSPCEEQVKLSKSITSEIETISLKEQTEKNKLVDILSNLPNISAQNVPIGEDESSNVEIRKYGKKRKFDFTPKFHYELGERLGLMDFEQAAKISGSRFTILKGQLAKLGRALINFMLETHVNEFAYTEVYHPALVKNEAMYNVGQLPKFSDDSYLTTDKLRLIPTSEVVLTNLVADKIIEEKELPIRFTAYSECFRKEAGSAGRDTRGMIRQHQFGKVELVSITTEDQSKDELERMTNAAEEILKKLELPYRIMLLCSGDMGFAAQKTYDIEVWLPEQNKYREISSCSNCGTFQARRMNTKYFLETDRKTKKYVHTLNGSALAIGRTIVAIMENYQNSDGSVTIPNVLQRYMSNDTVISKQ.

230–232 (TSE) serves as a coordination point for L-serine. Residue 261 to 263 (RKE) coordinates ATP. Residue E284 participates in L-serine binding. 348-351 (EISS) is an ATP binding site. Residue S385 coordinates L-serine.

The protein belongs to the class-II aminoacyl-tRNA synthetase family. Type-1 seryl-tRNA synthetase subfamily. In terms of assembly, homodimer. The tRNA molecule binds across the dimer.

It localises to the cytoplasm. It catalyses the reaction tRNA(Ser) + L-serine + ATP = L-seryl-tRNA(Ser) + AMP + diphosphate + H(+). It carries out the reaction tRNA(Sec) + L-serine + ATP = L-seryl-tRNA(Sec) + AMP + diphosphate + H(+). Its pathway is aminoacyl-tRNA biosynthesis; selenocysteinyl-tRNA(Sec) biosynthesis; L-seryl-tRNA(Sec) from L-serine and tRNA(Sec): step 1/1. In terms of biological role, catalyzes the attachment of serine to tRNA(Ser). Is also able to aminoacylate tRNA(Sec) with serine, to form the misacylated tRNA L-seryl-tRNA(Sec), which will be further converted into selenocysteinyl-tRNA(Sec). This chain is Serine--tRNA ligase, found in Wolbachia pipientis subsp. Culex pipiens (strain wPip).